The chain runs to 151 residues: MGTDDVAKSEKIREGFQINWLILRDADTGKILWQENKDFSCPDVEHEARVPIKILDLRAVSREINFSTVEAMENFRLDQKVLFKGRIMEEWFFEMGWVSPNTTNTWQSTIEAAPESQMMPAKVLNGNVTIETSFFDGETLISKSVVRLYYI.

It belongs to the PDE6D/unc-119 family. Interacts with Pde6.

It localises to the nucleus. It is found in the cytoplasm. This is Probable cGMP 3',5'-cyclic phosphodiesterase subunit delta from Culex quinquefasciatus (Southern house mosquito).